We begin with the raw amino-acid sequence, 132 residues long: Small ribosomal subunit protein uS8 (132 aa).

It belongs to the universal ribosomal protein uS8 family. In terms of assembly, part of the 30S ribosomal subunit. Contacts proteins S5 and S12.

Its function is as follows. One of the primary rRNA binding proteins, it binds directly to 16S rRNA central domain where it helps coordinate assembly of the platform of the 30S subunit. In Cereibacter sphaeroides (strain ATCC 17029 / ATH 2.4.9) (Rhodobacter sphaeroides), this protein is Small ribosomal subunit protein uS8.